We begin with the raw amino-acid sequence, 486 residues long: Glutamyl-tRNA(Gln) amidotransferase subunit A (486 aa).

Catalysis depends on charge relay system residues Lys-78 and Ser-153. Residue Ser-177 is the Acyl-ester intermediate of the active site.

This sequence belongs to the amidase family. GatA subfamily. As to quaternary structure, heterotrimer of A, B and C subunits.

It catalyses the reaction L-glutamyl-tRNA(Gln) + L-glutamine + ATP + H2O = L-glutaminyl-tRNA(Gln) + L-glutamate + ADP + phosphate + H(+). In terms of biological role, allows the formation of correctly charged Gln-tRNA(Gln) through the transamidation of misacylated Glu-tRNA(Gln) in organisms which lack glutaminyl-tRNA synthetase. The reaction takes place in the presence of glutamine and ATP through an activated gamma-phospho-Glu-tRNA(Gln). This Syntrophobacter fumaroxidans (strain DSM 10017 / MPOB) protein is Glutamyl-tRNA(Gln) amidotransferase subunit A.